A 420-amino-acid polypeptide reads, in one-letter code: UDP-glucuronic acid decarboxylase 1 (420 aa).

An N-acetylmethionine modification is found at Met-1. Residues 1–19 are Cytoplasmic-facing; sequence MVSKALLRLVSAVNRRRMK. The chain crosses the membrane as a helical; Signal-anchor for type II membrane protein span at residues 20–40; sequence LLLGIALLAYVASVWGNFVNM. Over 41–420 the chain is Lumenal; the sequence is RSIQENGELK…RIKKGRTRHS (380 aa). Position 94 is a phosphothreonine (Thr-94). Residues Gly-98, Phe-99, Val-100, Asp-119, Asn-120, Phe-122, Thr-123, Gly-124, Asp-144, and Val-145 each coordinate NAD(+). 2 residues coordinate UDP-alpha-D-glucuronate: Leu-149 and Tyr-150. NAD(+)-binding residues include Leu-159 and Ser-161. Lys-177 provides a ligand contact to UDP-alpha-D-glucuronate. Thr-178 lines the NAD(+) pocket. UDP-alpha-D-glucuronate-binding residues include Asn-185, Gly-188, Lys-191, and Arg-192. Residues Ala-200, Tyr-231, and Lys-235 each coordinate NAD(+). The active-site Proton acceptor is Tyr-231. UDP-alpha-D-glucuronate-binding residues include Tyr-245, Gln-248, and Glu-249. NAD(+) is bound by residues Thr-261, His-267, and Arg-272. N-linked (GlcNAc...) asparagine glycosylation occurs at Asn-316.

Belongs to the NAD(P)-dependent epimerase/dehydratase family. UDP-glucuronic acid decarboxylase subfamily. Homodimer and homotetramer. Interacts with AKT1. Requires NAD(+) as cofactor.

It is found in the golgi apparatus. Its subcellular location is the golgi stack membrane. It carries out the reaction UDP-alpha-D-glucuronate + H(+) = UDP-alpha-D-xylose + CO2. It functions in the pathway nucleotide-sugar biosynthesis; UDP-alpha-D-xylose biosynthesis; UDP-alpha-D-xylose from UDP-alpha-D-glucuronate: step 1/1. Its function is as follows. Catalyzes the NAD-dependent decarboxylation of UDP-glucuronic acid to UDP-xylose. Necessary for the biosynthesis of the core tetrasaccharide in glycosaminoglycan biosynthesis. The chain is UDP-glucuronic acid decarboxylase 1 from Homo sapiens (Human).